We begin with the raw amino-acid sequence, 130 residues long: Small ribosomal subunit protein uS8 (130 aa).

Belongs to the universal ribosomal protein uS8 family. In terms of assembly, part of the 30S ribosomal subunit. Contacts proteins S5 and S12.

In terms of biological role, one of the primary rRNA binding proteins, it binds directly to 16S rRNA central domain where it helps coordinate assembly of the platform of the 30S subunit. The chain is Small ribosomal subunit protein uS8 from Vibrio vulnificus (strain CMCP6).